The following is a 407-amino-acid chain: MARPDLTARLHAQRALRDAQGRRRTRRTVTRRDGVRLEVDGQWLTGFCSNDYLGLAQQFSVVNALQDAAAREGAGAGASHLVCGHHAMHEALEREVAEWLGYPRALLFGSGFAANLAVQQALLSEENDVCVQDKLNHASLLDATRLAGARLRRYPHLDTEGAMRQLKHAPDGAAMLATDGVFSMDGDIAPLRALSLVARLQQALFYVDDAHGVGVVGDGRGAVAAAGLSVDDVPLQLVTLGKALGGSGALVLGRDDLIEHLAETARPYIYTTAVPPAMAAAALEAVRLARRDHWRRTKLTDLIALFRSEARRHGLDLMASETPIQPLLCGDDHTAVAMSTALEQAGWLVGAIRPPTVPEGKARLRVTLSALHTPEQVRGLVEAIANARDRVTLAVREAAPPPLPAFA.

Arginine 24 provides a ligand contact to substrate. 111-112 serves as a coordination point for pyridoxal 5'-phosphate; it reads GF. Residue histidine 137 participates in substrate binding. Residues serine 183, histidine 211, and threonine 239 each coordinate pyridoxal 5'-phosphate. Lysine 242 carries the N6-(pyridoxal phosphate)lysine modification. Threonine 356 contributes to the substrate binding site.

This sequence belongs to the class-II pyridoxal-phosphate-dependent aminotransferase family. BioF subfamily. In terms of assembly, homodimer. It depends on pyridoxal 5'-phosphate as a cofactor.

It catalyses the reaction 6-carboxyhexanoyl-[ACP] + L-alanine + H(+) = (8S)-8-amino-7-oxononanoate + holo-[ACP] + CO2. Its pathway is cofactor biosynthesis; biotin biosynthesis. In terms of biological role, catalyzes the decarboxylative condensation of pimeloyl-[acyl-carrier protein] and L-alanine to produce 8-amino-7-oxononanoate (AON), [acyl-carrier protein], and carbon dioxide. The chain is 8-amino-7-oxononanoate synthase from Stenotrophomonas maltophilia (strain R551-3).